The sequence spans 291 residues: Nucleotide-binding protein Lm4b_02443 (291 aa).

An ATP-binding site is contributed by 13–20 (GMSGAGKT). Position 63-66 (63-66 (DLRG)) interacts with GTP.

Belongs to the RapZ-like family.

In terms of biological role, displays ATPase and GTPase activities. In Listeria monocytogenes serotype 4b (strain CLIP80459), this protein is Nucleotide-binding protein Lm4b_02443.